The sequence spans 484 residues: SPI-2 type 3 secretion system translocon protein SctE (484 aa).

The next 2 helical transmembrane spans lie at 85–105 and 152–172; these read FLQT…LNVF and GIFG…IGAL. Coiled-coil stretches lie at residues 107–152 and 413–457; these read NNAQ…RKAG and NTEK…LYKG.

This sequence belongs to the SctE/SipB/YopB family. The core secretion machinery of the T3SS is composed of approximately 20 different proteins, including cytoplasmic components, a base, an export apparatus and a needle. This subunit is involved in the formation of a pore, called the translocon, in host membrane. May form a complex with SseB and SseD/SctB2. SseB is required for correct localization of SseC/SctE2 on the bacterial cell surface.

It localises to the secreted. The protein localises to the cell surface. The protein resides in the host membrane. Functionally, component of the type III secretion system 2 (SPI-2 T3SS), also called injectisome, which is used to inject bacterial effector proteins into eukaryotic host cells. SseC/SctE2 and SseD/SctB2 are inserted into the host membrane where they form a pore and allow the translocation of effector proteins into the cytosol of target cells. Its function is as follows. Required for the translocation of SPI-2 effector proteins. Required for systemic Salmonella infection of the mouse. Essential for SpvB-induced actin depolymerization in the host cell cytoplasm. In Salmonella typhimurium (strain LT2 / SGSC1412 / ATCC 700720), this protein is SPI-2 type 3 secretion system translocon protein SctE.